Reading from the N-terminus, the 354-residue chain is DNA integrity scanning protein DisA (354 aa).

Residues 6–144 (GMKIKDTLKI…GDIKYVLRDS (139 aa)) enclose the DAC domain. Residues Gly73, Leu91, and 104–108 (TRHRT) contribute to the ATP site.

This sequence belongs to the DisA family. Homooctamer. The cofactor is Mg(2+).

It catalyses the reaction 2 ATP = 3',3'-c-di-AMP + 2 diphosphate. In terms of biological role, participates in a DNA-damage check-point that is active prior to asymmetric division when DNA is damaged. DisA forms globular foci that rapidly scan along the chromosomes during sporulation, searching for lesions. When a lesion is present, DisA pauses at the lesion site. This triggers a cellular response that culminates in a temporary block in sporulation initiation. Functionally, also has diadenylate cyclase activity, catalyzing the condensation of 2 ATP molecules into cyclic di-AMP (c-di-AMP). c-di-AMP acts as a signaling molecule that couples DNA integrity with progression of sporulation. The rise in c-di-AMP level generated by DisA while scanning the chromosome, operates as a positive signal that advances sporulation; upon encountering a lesion, the DisA focus arrests at the damaged site and halts c-di-AMP synthesis. This chain is DNA integrity scanning protein DisA, found in Clostridium botulinum (strain Alaska E43 / Type E3).